Consider the following 545-residue polypeptide: ATP synthase subunit alpha (545 aa).

173–180 (GDRQTGKT) is an ATP binding site.

It belongs to the ATPase alpha/beta chains family. F-type ATPases have 2 components, CF(1) - the catalytic core - and CF(0) - the membrane proton channel. CF(1) has five subunits: alpha(3), beta(3), gamma(1), delta(1), epsilon(1). CF(0) has three main subunits: a(1), b(2) and c(9-12). The alpha and beta chains form an alternating ring which encloses part of the gamma chain. CF(1) is attached to CF(0) by a central stalk formed by the gamma and epsilon chains, while a peripheral stalk is formed by the delta and b chains.

It is found in the cell membrane. It catalyses the reaction ATP + H2O + 4 H(+)(in) = ADP + phosphate + 5 H(+)(out). Functionally, produces ATP from ADP in the presence of a proton gradient across the membrane. The alpha chain is a regulatory subunit. The protein is ATP synthase subunit alpha of Leifsonia xyli subsp. xyli (strain CTCB07).